The following is a 138-amino-acid chain: Large ribosomal subunit protein uL16 (138 aa).

The segment covering 1-13 (MLQPKRRKYRKEQ) has biased composition (basic residues). Residues 1–20 (MLQPKRRKYRKEQKGRNTGI) form a disordered region.

It belongs to the universal ribosomal protein uL16 family. In terms of assembly, part of the 50S ribosomal subunit.

Functionally, binds 23S rRNA and is also seen to make contacts with the A and possibly P site tRNAs. The polypeptide is Large ribosomal subunit protein uL16 (Burkholderia mallei (strain NCTC 10247)).